Here is a 234-residue protein sequence, read N- to C-terminus: Protein SSP120 (234 aa).

Residues 1–22 (MRFLRGFVFSLAFTLYKVTATA) form the signal peptide. EF-hand domains follow at residues 52-87 (LKDYTPETFFALHDIKKKGFLDENDILSLYGLNREE) and 108-143 (MAKRVVSLIMRLLDVDDNTKITKEEYLQFAKRGNKF). T212 is subject to Phosphothreonine.

The sequence is that of Protein SSP120 (SSP120) from Saccharomyces cerevisiae (strain ATCC 204508 / S288c) (Baker's yeast).